The sequence spans 315 residues: Vomeronasal type-1 receptor 54 (315 aa).

Over 1-15 the chain is Extracellular; that stretch reads MNKMNRLSHNTEIRN. The chain crosses the membrane as a helical span at residues 16-40; it reads AIYSGVGIGISGNSFLLLFHIFKYI. Over 41 to 51 the chain is Cytoplasmic; that stretch reads RGQRSRHIDLP. A helical transmembrane segment spans residues 52 to 71; it reads IGLLSLIHLVMLIAMSLVAT. The Extracellular segment spans residues 72 to 90; sequence DIFMPWGRWGDTTCKCVIS. A disulfide bond links cysteine 85 and cysteine 172. Residues 91–112 form a helical membrane-spanning segment; that stretch reads LYRFCRSLSLCATSLLSILQAV. The Cytoplasmic segment spans residues 113-132; it reads TLNPRNSCLEKFKRKSPHYM. The chain crosses the membrane as a helical span at residues 133–154; the sequence is LGCLLFLSVFYTFISSPLATYI. Over 155 to 193 the chain is Extracellular; that stretch reads TAKSNLTSPSFTYITTSCSLAPMSYSFHLTVFILLTSRD. The helical transmembrane segment at 194–212 threads the bilayer; it reads VIFVGLMLLSSGYMVTFLG. The Cytoplasmic segment spans residues 213 to 239; that stretch reads RHKKQSQFLHITSFSLKPSAEKRAMRT. Residues 240 to 260 form a helical membrane-spanning segment; that stretch reads ILCLMSFFVLMYTLDSIVSYI. Over 261 to 267 the chain is Extracellular; that stretch reads RSIDDGQ. The helical transmembrane segment at 268 to 288 threads the bilayer; the sequence is IFYCVHIFTAHGYATVSPFLI. Residues 289–315 are Cytoplasmic-facing; sequence LSTEKYIINIFRSTFGRMVTIILLRNR.

It belongs to the G-protein coupled receptor 1 family.

The protein localises to the cell membrane. Functionally, putative pheromone receptor implicated in the regulation of social and reproductive behavior. This is Vomeronasal type-1 receptor 54 (Vmn1r54) from Mus musculus (Mouse).